A 167-amino-acid chain; its full sequence is Translationally-controlled tumor protein homolog (167 aa).

One can recognise a TCTP domain in the interval 1–167 (MIIYKDIFSN…WKHGIVEEKI (167 aa)). A phosphoserine mark is found at S9 and S15.

It belongs to the TCTP family. As to quaternary structure, interacts with the 40S and 60S ribosomal subunits. Interacts with microtubules.

The protein resides in the cytoplasm. It localises to the cytoskeleton. It is found in the mitochondrion. Its function is as follows. Involved in protein synthesis. Involved in microtubule stabilization. This Saccharomyces cerevisiae (strain ATCC 204508 / S288c) (Baker's yeast) protein is Translationally-controlled tumor protein homolog (TMA19).